A 177-amino-acid chain; its full sequence is ATP synthase subunit delta (177 aa).

This sequence belongs to the ATPase delta chain family. As to quaternary structure, F-type ATPases have 2 components, F(1) - the catalytic core - and F(0) - the membrane proton channel. F(1) has five subunits: alpha(3), beta(3), gamma(1), delta(1), epsilon(1). F(0) has three main subunits: a(1), b(2) and c(10-14). The alpha and beta chains form an alternating ring which encloses part of the gamma chain. F(1) is attached to F(0) by a central stalk formed by the gamma and epsilon chains, while a peripheral stalk is formed by the delta and b chains.

Its subcellular location is the cell inner membrane. Its function is as follows. F(1)F(0) ATP synthase produces ATP from ADP in the presence of a proton or sodium gradient. F-type ATPases consist of two structural domains, F(1) containing the extramembraneous catalytic core and F(0) containing the membrane proton channel, linked together by a central stalk and a peripheral stalk. During catalysis, ATP synthesis in the catalytic domain of F(1) is coupled via a rotary mechanism of the central stalk subunits to proton translocation. In terms of biological role, this protein is part of the stalk that links CF(0) to CF(1). It either transmits conformational changes from CF(0) to CF(1) or is implicated in proton conduction. This chain is ATP synthase subunit delta, found in Sulfurimonas denitrificans (strain ATCC 33889 / DSM 1251) (Thiomicrospira denitrificans (strain ATCC 33889 / DSM 1251)).